A 78-amino-acid polypeptide reads, in one-letter code: Beta-defensin 105A (78 aa).

The N-terminal stretch at 1-27 is a signal peptide; the sequence is MALIKKTFFFLFAMFFILVQLSSGCQA. 3 disulfide bridges follow: Cys-43/Cys-74, Cys-53/Cys-67, and Cys-57/Cys-73.

Belongs to the beta-defensin family.

It localises to the secreted. Functionally, has antimicrobial activity. The polypeptide is Beta-defensin 105A (DEFB105A) (Pan troglodytes (Chimpanzee)).